The chain runs to 382 residues: Acetylxylan esterase A (382 aa).

An N-terminal signal peptide occupies residues 1–21 (MKSLSFSFLVTLFLYLTLSSA). Positions 22–31 (RTLGKDVNKR) are excised as a propeptide. A catalytic region spans residues 35 to 307 (GSLQQVTGFG…GAKDMEWFGF (273 aa)). A glycan (N-linked (GlcNAc...) asparagine) is linked at Asn-46. Ser-152 acts as the Charge relay system in catalysis. Residue Asn-194 is glycosylated (N-linked (GlcNAc...) asparagine). The ser/Thr-rich linker stretch occupies residues 308-345 (SGSGSSSTTTASATKTSTTSTTSTKTTSSTSSTTTSST). Residues 313-345 (SSTTTASATKTSTTSTTSTKTTSSTSSTTTSST) show a composition bias toward low complexity. The segment at 313 to 346 (SSTTTASATKTSTTSTTSTKTTSSTSSTTTSSTG) is disordered. Residues 346–382 (GVAAHWGQCGGSGWTGPTVCESGYTCTYSNAWYSQCL) enclose the CBM1 domain.

Belongs to the carbohydrate esterase 1 (CE1) family. AxeA subfamily. In terms of assembly, monomer. Post-translationally, glycosylated.

Its subcellular location is the secreted. The catalysed reaction is Deacetylation of xylans and xylo-oligosaccharides.. It participates in glycan degradation; xylan degradation. Inactivated by phenylmethylsulfonylfluorid (PMSF), a specific inhibitor of serine esterases. Acetylxylan esterase involved in the hydrolysis of xylan, a major structural heterogeneous polysaccharide found in plant biomass representing the second most abundant polysaccharide in the biosphere, after cellulose. Degrades acetylated xylans by cleaving acetyl side groups from the hetero-xylan backbone. This chain is Acetylxylan esterase A (axeA), found in Talaromyces purpureogenus (Soft rot fungus).